The primary structure comprises 570 residues: Potassium-transporting ATPase potassium-binding subunit (570 aa).

Helical transmembrane passes span 7-27, 65-85, 95-115, 135-155, 179-199, 254-274, 286-306, 383-403, 422-442, 489-509, and 528-548; these read AEIA…GVFL, AYAL…YAVL, PQGF…SFIT, LVLT…AAAL, LYLL…LGLP, LTNL…FFAF, ALVI…YATE, GVAI…LMVG, ILAV…AAVL, LGIA…AIAG, and GGLF…LQFF.

Belongs to the KdpA family. As to quaternary structure, the system is composed of three essential subunits: KdpA, KdpB and KdpC.

The protein resides in the cell inner membrane. Its function is as follows. Part of the high-affinity ATP-driven potassium transport (or Kdp) system, which catalyzes the hydrolysis of ATP coupled with the electrogenic transport of potassium into the cytoplasm. This subunit binds the periplasmic potassium ions and delivers the ions to the membrane domain of KdpB through an intramembrane tunnel. The chain is Potassium-transporting ATPase potassium-binding subunit from Caulobacter vibrioides (strain ATCC 19089 / CIP 103742 / CB 15) (Caulobacter crescentus).